We begin with the raw amino-acid sequence, 306 residues long: D-alanine--D-alanine ligase (306 aa).

In terms of domain architecture, ATP-grasp spans 101–303 (KQVWQGIGLT…FSQLVVKILE (203 aa)). 134 to 189 (VADLGLPLIVKPSLEGSSVGMTKVNEISELRGALEAAFRYDVDLLVEKWLHGPEYT) is an ATP binding site. Mg(2+) contacts are provided by aspartate 257, glutamate 270, and asparagine 272.

It belongs to the D-alanine--D-alanine ligase family. Requires Mg(2+) as cofactor. It depends on Mn(2+) as a cofactor.

The protein localises to the cytoplasm. It carries out the reaction 2 D-alanine + ATP = D-alanyl-D-alanine + ADP + phosphate + H(+). It participates in cell wall biogenesis; peptidoglycan biosynthesis. In terms of biological role, cell wall formation. This Photorhabdus laumondii subsp. laumondii (strain DSM 15139 / CIP 105565 / TT01) (Photorhabdus luminescens subsp. laumondii) protein is D-alanine--D-alanine ligase.